We begin with the raw amino-acid sequence, 846 residues long: MPNSRPRPRRGAGGGAGAAGRDRLVARSLQSAEHCLGDQDFGTAYAHYLLVLSLAPELKDDVKETFQYTLFKWAEELHALSRIQDLLGCYEQALELFPDDEVICNSMGEHLFRMGFRDEAAGYFHKAVKLNPDFNDAKENFYRVANWLVERWHFIMLNDTRRNMVYNAAIQKAVCLGSRTVLDIGTGTGILSMFAKKAGAQSVYACELSKTMYELACDVVAANKMENGIKLLHMKSLDIEIPKHIPERLSLVVTETVDAGVFGEGIVESLIHAWEHLLLQPKTKEENGNCGKYGKVIPAGAVIFGMAVECAEIRRHHRVGAKDIAGIHLPTNVKFQSPAYTSVDTEETVEPYTTEKMSGIPGGYLPLTECFQIMKVDFNNLQELKSLATKKPHSLNVPAIKEGVLDAIMVWFVLQLDDEYSLSTSPSEETCWEQAVYPVQALEDYCIQPGDRVTMEASCHDCYLRIQGISILHLEHEMEVMKGFTKSKDLLSLGNEAELCSALANLQTSRPEALEQTCMLEPTEIALLNNIPYHEGFKTAMRKVLSSLAPELLWQPMDTHCQYMEMNSGSGQSDAAPSTADPFYVLDVSEGFSLLPILAGTLGHVKPYSSVEKDQHCIALDLIAEANHFPKETLEFWLRHIEDEAAVLQRPKSDKLWSIIILDVIEPSGLIQQELMEKAAISRCLLQSGGKIFPQYVLMFGMLVESQTLVEESAVQGTEHTLGLNIAPFINQFQVPIRVCLDLSSLPCVPLSQPVELLRLDLMTPYLNTSNKEVKVRVCRSGRVTAVPFWFHLCLDDEVRLDTSGEASHWKQAAVVLDNPIQVQAGEELVLSVEHHKSNVSIAVKP.

3 TPR repeats span residues 25–58 (VARSLQSAEHCLGDQDFGTAYAHYLLVLSLAPEL), 67–100 (QYTLFKWAEELHALSRIQDLLGCYEQALELFPDD), and 101–134 (EVICNSMGEHLFRMGFRDEAAGYFHKAVKLNPDF). SAM-dependent MTase PRMT-type domains lie at 137-466 (AKEN…YLRI) and 530-846 (NIPY…AVKP).

Belongs to the class I-like SAM-binding methyltransferase superfamily. Protein arginine N-methyltransferase family. Found in a complex with PRMT9, SF3B2 and SF3B4. Interacts with SF3B2.

It localises to the cytoplasm. The enzyme catalyses L-arginyl-[protein] + 2 S-adenosyl-L-methionine = N(omega),N(omega)'-dimethyl-L-arginyl-[protein] + 2 S-adenosyl-L-homocysteine + 2 H(+). In terms of biological role, arginine methyltransferase that can both catalyze the formation of omega-N monomethylarginine (MMA) and symmetrical dimethylarginine (sDMA). Specifically mediates the symmetrical dimethylation of SF3B2. Involved in the regulation of alternative splicing of pre-mRNA. In Mus musculus (Mouse), this protein is Protein arginine N-methyltransferase 9 (Prmt9).